Consider the following 309-residue polypeptide: MILTVTLNPAIDVSYPLDELKCDTVNRVVDVTKTPGGKGLNVCRVLNDFGETVKATGCIGGESGDFIINHLPDSILSRFYKISGDTRTCIAILHEGNQTEILEKGPLLSVEEIDGFTHHFKYLLNDVDVVTLSGSLPAGMPDDYYQKLIGIANLNGKKTVLDCSGNALEAVLKGDSKPTVIKPNLEELSQLLGKEMTKDFEALKEVLQDELFEGIEWIIVSLGADGVFAKHNDTFYNVDIPKIEIVSAVGSGDSTVAGIASGLANDEDDRALLTKANVLGMLNAQEKTTGHVNMANYDKLYQSIKVKEV.

It belongs to the carbohydrate kinase PfkB family. LacC subfamily.

It carries out the reaction D-tagatofuranose 6-phosphate + ATP = D-tagatofuranose 1,6-bisphosphate + ADP + H(+). It participates in carbohydrate metabolism; D-tagatose 6-phosphate degradation; D-glyceraldehyde 3-phosphate and glycerone phosphate from D-tagatose 6-phosphate: step 1/2. The chain is Tagatose-6-phosphate kinase from Streptococcus pyogenes serotype M18 (strain MGAS8232).